The chain runs to 314 residues: Triosephosphate isomerase, chloroplastic (314 aa).

Residues 1–22 show a composition bias toward polar residues; it reads MAVASTSLASQLSGPKSLSQPY. Residues 1–25 are disordered; that stretch reads MAVASTSLASQLSGPKSLSQPYSGL. The transit peptide at 1–59 directs the protein to the chloroplast; sequence MAVASTSLASQLSGPKSLSQPYSGLRRSCPKLDQSHSSLFQHLSLSSSSRKASRAVVAM. Substrate-binding residues include Asn-70 and Lys-72. His-154 (electrophile) is an active-site residue. The Proton acceptor role is filled by Glu-224.

Belongs to the triosephosphate isomerase family. Homodimer.

The protein localises to the plastid. It is found in the chloroplast. It carries out the reaction D-glyceraldehyde 3-phosphate = dihydroxyacetone phosphate. It functions in the pathway carbohydrate biosynthesis; Calvin cycle. In Fragaria ananassa (Strawberry), this protein is Triosephosphate isomerase, chloroplastic (TPI).